The chain runs to 614 residues: Laccase 1 (614 aa).

The signal sequence occupies residues Met-1–Ala-21. Plastocyanin-like domains lie at Ile-30 to Lys-143 and Tyr-172 to Pro-360. A glycan (N-linked (GlcNAc...) asparagine) is linked at Asn-75. Cu cation is bound by residues His-79, His-81, His-123, and His-125. Asn-257, Asn-280, Asn-445, Asn-469, and Asn-485 each carry an N-linked (GlcNAc...) asparagine glycan. Residues Asn-469–Gly-599 enclose the Plastocyanin-like 3 domain. Cu cation contacts are provided by His-507, His-510, and His-512. Asn-527 carries an N-linked (GlcNAc...) asparagine glycan. 4 residues coordinate Cu cation: His-581, Cys-582, His-583, and His-587.

The protein belongs to the multicopper oxidase family. Cu cation serves as cofactor.

The protein localises to the cell surface. The protein operates within pigment biosynthesis. Laccase; part of the Pks1 gene cluster that mediates the biosynthesis of an anthraquinone derivative pigment that contributes to conidial pigmentation that provides protection from UV radiation, heat and cold stress. The polyketide synthase Pks1 produces 1-acetyl-2,4,6,8-tetrahydroxy-9,10-anthraquinone though condensation of acetyl-CoA with malonyl-CoA. The dehydratase EthD and the laccase Mlac1 further convert the anthraquinone derivative into the final conidial pigment. The sequence is that of Laccase 1 from Metarhizium majus (strain ARSEF 297).